The following is a 704-amino-acid chain: CAP-Gly domain-containing linker protein 4 (704 aa).

3 ANK repeats span residues 65 to 101, 149 to 180, and 186 to 215; these read TSVSELFAILRQWVPQVQQNIDIIGNEILKRGCNVND, TNMNALHYASYFDVPELIRVILKTSKPKDVDA, and NFGTALHIAAHNLCAGAVKTLLELGANPAF. The CAP-Gly 1 domain occupies 303-345; the sequence is GTTEFASGQWAGIELDEPEGKNNGSVGRVQYFKCAPKYGIFAP. Positions 353–479 are disordered; the sequence is KDGRKTTTHT…SATSAANNSH (127 aa). Low complexity-rich tracts occupy residues 360–371, 423–432, and 440–461; these read THTPSTRATPHA, SMSSSSSSSS, and PKKLTTSSGGKKTLSKSPSLPS. Residues 504–546 enclose the CAP-Gly 2 domain; it reads GTTNFAPGYWYGIELEKPHGKNDGSVGGVQYFSCSPRYGIFAP. Residues Ser556 and Ser608 each carry the phosphoserine modification. The CAP-Gly 3 domain occupies 643 to 685; the sequence is GPTDFASGIWLGLELRSAKGKNDGAVGDKRYFTCKPNYGVLVR.

This is CAP-Gly domain-containing linker protein 4 (Clip4) from Mus musculus (Mouse).